The sequence spans 218 residues: Ras-related protein Rab-27B (218 aa).

N-acetylthreonine is present on Thr2. 16–24 (GDSGVGKTT) lines the GTP pocket. Positions 38–46 (FITTVGIDF) match the Effector region motif. Residues 74 to 78 (DTAGQ), 133 to 136 (NKAD), and 163 to 165 (SAA) contribute to the GTP site. A disulfide bridge connects residues Cys123 and Cys188. Residues 194 to 218 (IPDTVNGGNSGNLDGEKPPEKKCIC) are disordered. Positions 207–218 (DGEKPPEKKCIC) are enriched in basic and acidic residues. S-geranylgeranyl cysteine attachment occurs at residues Cys216 and Cys218. Cys218 carries the cysteine methyl ester modification.

The protein belongs to the small GTPase superfamily. Rab family. In terms of assembly, interacts with SYTL2, SYTL4, MYRIP and MLPH. Interacts with RPH3A and RPH3A. Interacts (GDP-bound form preferentially) with DENND10. Expressed primarily in testis.

Its subcellular location is the membrane. It localises to the late endosome. The catalysed reaction is GTP + H2O = GDP + phosphate + H(+). Regulated by guanine nucleotide exchange factors (GEFs) which promote the exchange of bound GDP for free GTP, GTPase activating proteins (GAPs) which increase the GTP hydrolysis activity, and GDP dissociation inhibitors which inhibit the dissociation of the nucleotide from the GTPase. Activated by GEFs such as DENND10. Its function is as follows. Small GTPase which cycles between active GTP-bound and inactive GDP-bound states. In its active state, binds to a variety of effector proteins to regulate homeostasis of late endocytic pathway, including endosomal positioning, maturation and secretion. Plays a role in NTRK2/TRKB axonal anterograde transport by facilitating the association of NTRK2/TRKB with KLC1. May be involved in targeting uroplakins to urothelial apical membranes. The sequence is that of Ras-related protein Rab-27B (RAB27B) from Homo sapiens (Human).